The following is a 1447-amino-acid chain: Gag-Pol polyprotein (1447 aa).

Gly2 is lipidated: N-myristoyl glycine; by host. The interaction with Gp41 stretch occupies residues 7-31 (VLSGGELDRWEKIRLRPGGKKKYKL). Residues 8–43 (LSGGELDRWEKIRLRPGGKKKYKLKHIVWASRELER) are interaction with host CALM1. Residues 12–19 (ELDRWEKI) are interaction with host AP3D1. The interaction with membrane phosphatidylinositol 4,5-bisphosphate and RNA stretch occupies residues 14–33 (DRWEKIRLRPGGKKKYKLKH). Residues 16–22 (WEKIRLR) carry the Nuclear export signal motif. The Nuclear localization signal signature appears at 26–32 (KKKYKLK). The interval 73-77 (EELRS) is interaction with membrane phosphatidylinositol 4,5-bisphosphate. The segment at 106 to 128 (EEQNKSKKKAQQAAADTGHSSQV) is disordered. Residue Tyr132 is modified to Phosphotyrosine; by host. Residues 189 to 227 (NTVGGHQAAMQMLKETINEEAAEWDRVHPVHAGPIAPGQ) are interaction with human PPIA/CYPA and NUP153. The tract at residues 277–363 (YSPTSILDIR…GGPGHKARVL (87 aa)) is dimerization/Multimerization of capsid protein p24. 2 CCHC-type zinc fingers span residues 390–407 (VKCFNCGKEGHIARNCRA) and 411–428 (KGCWKCGKEGHQMKDCTE). A disordered region spans residues 447–476 (EFSSEQTRANSPTISSEQTRANSPTRRELQ). Residues 450–470 (SEQTRANSPTISSEQTRANSP) show a composition bias toward polar residues. The dimerization of protease stretch occupies residues 501-505 (PQITL). One can recognise a Peptidase A2 domain in the interval 520–589 (KEALLDTGAD…TPVNIIGRNL (70 aa)). The For protease activity; shared with dimeric partner role is filled by Asp525. 2 dimerization of protease regions span residues 549-555 (GIGGFIK) and 588-600 (NLLTQIGCTLNFP). Positions 643–833 (EGKISKIGPE…PPFLWMGYEL (191 aa)) constitute a Reverse transcriptase domain. Residues Asp709, Asp784, and Asp785 each contribute to the Mg(2+) site. The RT 'primer grip' stretch occupies residues 826 to 834 (FLWMGYELH). Positions 997–1013 (WETWWTEYWQATWIPEW) match the Tryptophan repeat motif motif. Residues 1033 to 1156 (IVGAETFYVD…VDKLVSAGIR (124 aa)) form the RNase H type-1 domain. Mg(2+) is bound by residues Asp1042, Glu1077, Asp1097, and Asp1148. The Integrase-type zinc-finger motif lies at 1162 to 1203 (DGIDKAQDEHEKYHSNWRAMASDFNLPPVVAKEIVASCDKCQ). Residues His1171, His1175, Cys1199, and Cys1202 each contribute to the Zn(2+) site. The region spanning 1213-1363 (VDCSPGIWQL…SAGERIVDII (151 aa)) is the Integrase catalytic domain. Positions 1223, 1275, and 1311 each coordinate Mg(2+). The segment at residues 1382–1429 (FRVYYRDSRDPLWKGPAKLLWKGEGAVVIQDNSDIKVVPRRKAKIIRD) is a DNA-binding region (integrase-type).

In terms of assembly, homotrimer; further assembles as hexamers of trimers. Interacts with gp41 (via C-terminus). Interacts with host CALM1; this interaction induces a conformational change in the Matrix protein, triggering exposure of the myristate group. Interacts with host AP3D1; this interaction allows the polyprotein trafficking to multivesicular bodies during virus assembly. Part of the pre-integration complex (PIC) which is composed of viral genome, matrix protein, Vpr and integrase. As to quaternary structure, homodimer; the homodimer further multimerizes as homohexamers or homopentamers. Interacts with human PPIA/CYPA; This interaction stabilizes the capsid. Interacts with human NUP153. Interacts with host PDZD8; this interaction stabilizes the capsid. Interacts with monkey TRIM5; this interaction destabilizes the capsid. Homodimer, whose active site consists of two apposed aspartic acid residues. In terms of assembly, heterodimer of p66 RT and p51 RT (RT p66/p51). Heterodimerization of RT is essential for DNA polymerase activity. The overall folding of the subdomains is similar in p66 RT and p51 RT but the spatial arrangements of the subdomains are dramatically different. As to quaternary structure, homotetramer; may further associate as a homohexadecamer. Part of the pre-integration complex (PIC) which is composed of viral genome, matrix protein, Vpr and integrase. Interacts with human SMARCB1/INI1 and human PSIP1/LEDGF isoform 1. Interacts with human KPNA3; this interaction might play a role in nuclear import of the pre-integration complex. Interacts with human NUP153; this interaction might play a role in nuclear import of the pre-integration complex. Requires Mg(2+) as cofactor. Post-translationally, specific enzymatic cleavages by the viral protease yield mature proteins. The protease is released by autocatalytic cleavage. The polyprotein is cleaved during and after budding, this process is termed maturation. Proteolytic cleavage of p66 RT removes the RNase H domain to yield the p51 RT subunit. Nucleocapsid protein p7 might be further cleaved after virus entry. In terms of processing, tyrosine phosphorylated presumably in the virion by a host kinase. Phosphorylation is apparently not a major regulator of membrane association. Phosphorylated possibly by host MAPK1; this phosphorylation is necessary for Pin1-mediated virion uncoating. Post-translationally, methylated by host PRMT6, impairing its function by reducing RNA annealing and the initiation of reverse transcription.

It localises to the host cell membrane. The protein resides in the host endosome. Its subcellular location is the host multivesicular body. It is found in the virion membrane. The protein localises to the host nucleus. It localises to the host cytoplasm. The protein resides in the virion. The enzyme catalyses Specific for a P1 residue that is hydrophobic, and P1' variable, but often Pro.. It carries out the reaction Endohydrolysis of RNA in RNA/DNA hybrids. Three different cleavage modes: 1. sequence-specific internal cleavage of RNA. Human immunodeficiency virus type 1 and Moloney murine leukemia virus enzymes prefer to cleave the RNA strand one nucleotide away from the RNA-DNA junction. 2. RNA 5'-end directed cleavage 13-19 nucleotides from the RNA end. 3. DNA 3'-end directed cleavage 15-20 nucleotides away from the primer terminus.. It catalyses the reaction 3'-end directed exonucleolytic cleavage of viral RNA-DNA hybrid.. The catalysed reaction is DNA(n) + a 2'-deoxyribonucleoside 5'-triphosphate = DNA(n+1) + diphosphate. The viral protease is inhibited by many synthetic protease inhibitors (PIs), such as amprenavir, atazanavir, indinavir, loprinavir, nelfinavir, ritonavir and saquinavir. RT can be inhibited either by nucleoside RT inhibitors (NRTIs) or by non nucleoside RT inhibitors (NNRTIs). NRTIs act as chain terminators, whereas NNRTIs inhibit DNA polymerization by binding a small hydrophobic pocket near the RT active site and inducing an allosteric change in this region. Classical NRTIs are abacavir, adefovir (PMEA), didanosine (ddI), lamivudine (3TC), stavudine (d4T), tenofovir (PMPA), zalcitabine (ddC), and zidovudine (AZT). Classical NNRTIs are atevirdine (BHAP U-87201E), delavirdine, efavirenz (DMP-266), emivirine (I-EBU), and nevirapine (BI-RG-587). The tritherapies used as a basic effective treatment of AIDS associate two NRTIs and one NNRTI. Use of protease inhibitors in tritherapy regimens permit more ambitious therapeutic strategies. In terms of biological role, gag-Pol polyprotein and Gag polyprotein may regulate their own translation, by the binding genomic RNA in the 5'-UTR. At low concentration, Gag-Pol and Gag would promote translation, whereas at high concentration, the polyproteins encapsidate genomic RNA and then shut off translation. Its function is as follows. Matrix protein p17 targets Gag and Gag-pol polyproteins to the plasma membrane via a multipartite membrane-binding signal, that includes its myristoylated N-terminus. Matrix protein is part of the pre-integration complex. Implicated in the release from host cell mediated by Vpu. Binds to RNA. Functionally, forms the conical core that encapsulates the genomic RNA-nucleocapsid complex in the virion. Most core are conical, with only 7% tubular. The core is constituted by capsid protein hexamer subunits. The core is disassembled soon after virion entry. Host restriction factors such as TRIM5-alpha or TRIMCyp bind retroviral capsids and cause premature capsid disassembly, leading to blocks in reverse transcription. Capsid restriction by TRIM5 is one of the factors which restricts HIV-1 to the human species. Host PIN1 apparently facilitates the virion uncoating. On the other hand, interactions with PDZD8 or CYPA stabilize the capsid. Nucleocapsid protein p7 encapsulates and protects viral dimeric unspliced genomic RNA (gRNA). Binds these RNAs through its zinc fingers. Acts as a nucleic acid chaperone which is involved in rearangement of nucleic acid secondary structure during gRNA retrotranscription. Also facilitates template switch leading to recombination. As part of the polyprotein, participates in gRNA dimerization, packaging, tRNA incorporation and virion assembly. In terms of biological role, the aspartyl protease mediates proteolytic cleavages of Gag and Gag-Pol polyproteins during or shortly after the release of the virion from the plasma membrane. Cleavages take place as an ordered, step-wise cascade to yield mature proteins. This process is called maturation. Displays maximal activity during the budding process just prior to particle release from the cell. Also cleaves Nef and Vif, probably concomitantly with viral structural proteins on maturation of virus particles. Hydrolyzes host EIF4GI and PABP1 in order to shut off the capped cellular mRNA translation. The resulting inhibition of cellular protein synthesis serves to ensure maximal viral gene expression and to evade host immune response. Also mediates cleavage of host YTHDF3. Mediates cleavage of host CARD8, thereby activating the CARD8 inflammasome, leading to the clearance of latent HIV-1 in patient CD4(+) T-cells after viral reactivation; in contrast, HIV-1 can evade CARD8-sensing when its protease remains inactive in infected cells prior to viral budding. Its function is as follows. Reverse transcriptase/ribonuclease H (RT) is a multifunctional enzyme that converts the viral RNA genome into dsDNA in the cytoplasm, shortly after virus entry into the cell. This enzyme displays a DNA polymerase activity that can copy either DNA or RNA templates, and a ribonuclease H (RNase H) activity that cleaves the RNA strand of RNA-DNA heteroduplexes in a partially processive 3' to 5' endonucleasic mode. Conversion of viral genomic RNA into dsDNA requires many steps. A tRNA(3)-Lys binds to the primer-binding site (PBS) situated at the 5'-end of the viral RNA. RT uses the 3' end of the tRNA primer to perform a short round of RNA-dependent minus-strand DNA synthesis. The reading proceeds through the U5 region and ends after the repeated (R) region which is present at both ends of viral RNA. The portion of the RNA-DNA heteroduplex is digested by the RNase H, resulting in a ssDNA product attached to the tRNA primer. This ssDNA/tRNA hybridizes with the identical R region situated at the 3' end of viral RNA. This template exchange, known as minus-strand DNA strong stop transfer, can be either intra- or intermolecular. RT uses the 3' end of this newly synthesized short ssDNA to perform the RNA-dependent minus-strand DNA synthesis of the whole template. RNase H digests the RNA template except for two polypurine tracts (PPTs) situated at the 5'-end and near the center of the genome. It is not clear if both polymerase and RNase H activities are simultaneous. RNase H probably can proceed both in a polymerase-dependent (RNA cut into small fragments by the same RT performing DNA synthesis) and a polymerase-independent mode (cleavage of remaining RNA fragments by free RTs). Secondly, RT performs DNA-directed plus-strand DNA synthesis using the PPTs that have not been removed by RNase H as primers. PPTs and tRNA primers are then removed by RNase H. The 3' and 5' ssDNA PBS regions hybridize to form a circular dsDNA intermediate. Strand displacement synthesis by RT to the PBS and PPT ends produces a blunt ended, linear dsDNA copy of the viral genome that includes long terminal repeats (LTRs) at both ends. Functionally, catalyzes viral DNA integration into the host chromosome, by performing a series of DNA cutting and joining reactions. This enzyme activity takes place after virion entry into a cell and reverse transcription of the RNA genome in dsDNA. The first step in the integration process is 3' processing. This step requires a complex comprising the viral genome, matrix protein, Vpr and integrase. This complex is called the pre-integration complex (PIC). The integrase protein removes 2 nucleotides from each 3' end of the viral DNA, leaving recessed CA OH's at the 3' ends. In the second step, the PIC enters cell nucleus. This process is mediated through integrase and Vpr proteins, and allows the virus to infect a non dividing cell. This ability to enter the nucleus is specific of lentiviruses, other retroviruses cannot and rely on cell division to access cell chromosomes. In the third step, termed strand transfer, the integrase protein joins the previously processed 3' ends to the 5' ends of strands of target cellular DNA at the site of integration. The 5'-ends are produced by integrase-catalyzed staggered cuts, 5 bp apart. A Y-shaped, gapped, recombination intermediate results, with the 5'-ends of the viral DNA strands and the 3' ends of target DNA strands remaining unjoined, flanking a gap of 5 bp. The last step is viral DNA integration into host chromosome. This involves host DNA repair synthesis in which the 5 bp gaps between the unjoined strands are filled in and then ligated. Since this process occurs at both cuts flanking the HIV genome, a 5 bp duplication of host DNA is produced at the ends of HIV-1 integration. Alternatively, Integrase may catalyze the excision of viral DNA just after strand transfer, this is termed disintegration. The polypeptide is Gag-Pol polyprotein (gag-pol) (Homo sapiens (Human)).